The following is a 382-amino-acid chain: uncharacterized protein (382 aa).

A run of 10 helical transmembrane segments spans residues 8–28, 41–61, 73–93, 94–114, 133–153, 157–177, 208–228, 274–294, 325–345, and 349–369; these read VLLL…LNTL, WQVG…TLIA, SYHC…LTVD, FWSW…IWVI, AAYM…LGIV, LLSV…PLLF, GCII…LYLS, VVIL…ALFI, ALLM…SLLM, and SDNL…MMLL.

Belongs to the major facilitator superfamily. YcaD (TC 2.A.1.26) family.

It localises to the cell inner membrane. This is an uncharacterized protein from Yersinia pseudotuberculosis serotype O:3 (strain YPIII).